The following is a 215-amino-acid chain: Elongation factor Ts (215 aa).

The segment at 80–83 is involved in Mg(2+) ion dislocation from EF-Tu; sequence TDFA.

Belongs to the EF-Ts family.

Its subcellular location is the cytoplasm. Its function is as follows. Associates with the EF-Tu.GDP complex and induces the exchange of GDP to GTP. It remains bound to the aminoacyl-tRNA.EF-Tu.GTP complex up to the GTP hydrolysis stage on the ribosome. This Acetivibrio thermocellus (strain ATCC 27405 / DSM 1237 / JCM 9322 / NBRC 103400 / NCIMB 10682 / NRRL B-4536 / VPI 7372) (Clostridium thermocellum) protein is Elongation factor Ts.